A 430-amino-acid polypeptide reads, in one-letter code: Aspartate aminotransferase, mitochondrial (430 aa).

A mitochondrion-targeting transit peptide spans 1-29 (MALLHSGRVLPGIAAAFHPGLAAAASARA). Position 48 is a phosphothreonine (T48). K59 carries the N6-acetyllysine modification. G65 contributes to the substrate binding site. K73 bears the N6-acetyllysine; alternate mark. The residue at position 73 (K73) is an N6-succinyllysine; alternate. The residue at position 82 (K82) is an N6-acetyllysine. Position 90 is an N6-acetyllysine; alternate (K90). Residue K90 is modified to N6-succinyllysine; alternate. At Y96 the chain carries 3'-nitrotyrosine; alternate. Residue Y96 is modified to Phosphotyrosine; alternate. N6-acetyllysine; alternate occurs at positions 107 and 122. Residues K107 and K122 each carry the N6-succinyllysine; alternate modification. S143 is subject to Phosphoserine. K159 is modified (N6-acetyllysine; alternate). An N6-succinyllysine; alternate modification is found at K159. W162 lines the substrate pocket. K185 is subject to N6-acetyllysine; alternate. K185 is modified (N6-succinyllysine; alternate). N215 serves as a coordination point for substrate. K227 is modified (N6-succinyllysine). K234 is modified (N6-acetyllysine). 2 positions are modified to N6-acetyllysine; alternate: K279 and K296. Position 279 is an N6-(pyridoxal phosphate)lysine; alternate (K279). K296 carries the post-translational modification N6-succinyllysine; alternate. Position 302 is an N6-acetyllysine (K302). K309 bears the N6-acetyllysine; alternate mark. K309 is subject to N6-succinyllysine; alternate. Asymmetric dimethylarginine is present on R313. A Phosphothreonine modification is found at T333. An N6-acetyllysine; alternate modification is found at K338. An N6-succinyllysine; alternate modification is found at K338. The residue at position 345 (K345) is an N6-acetyllysine. The residue at position 363 (K363) is an N6-acetyllysine; alternate. Position 363 is an N6-succinyllysine; alternate (K363). An N6-acetyllysine mark is found at K364 and K387. 2 positions are modified to N6-acetyllysine; alternate: K396 and K404. 2 positions are modified to N6-succinyllysine; alternate: K396 and K404. Substrate is bound at residue R407.

Belongs to the class-I pyridoxal-phosphate-dependent aminotransferase family. Homodimer. Requires pyridoxal 5'-phosphate as cofactor.

The protein resides in the mitochondrion matrix. It localises to the cell membrane. It catalyses the reaction L-aspartate + 2-oxoglutarate = oxaloacetate + L-glutamate. The enzyme catalyses L-kynurenine + 2-oxoglutarate = kynurenate + L-glutamate + H2O. Its function is as follows. Catalyzes the irreversible transamination of the L-tryptophan metabolite L-kynurenine to form kynurenic acid (KA). As a member of the malate-aspartate shuttle, it has a key role in the intracellular NAD(H) redox balance. Is important for metabolite exchange between mitochondria and cytosol, and for amino acid metabolism. Facilitates cellular uptake of long-chain free fatty acids. This is Aspartate aminotransferase, mitochondrial from Homo sapiens (Human).